The sequence spans 364 residues: CCA-adding enzyme (364 aa).

ATP is bound by residues G19 and R22. CTP is bound by residues G19 and R22. Mg(2+) contacts are provided by D32 and D34. 3 residues coordinate ATP: R102, R148, and R151. Residues R102, R148, and R151 each coordinate CTP.

The protein belongs to the tRNA nucleotidyltransferase/poly(A) polymerase family. Bacterial CCA-adding enzyme type 2 subfamily. The cofactor is Mg(2+).

It catalyses the reaction a tRNA precursor + 2 CTP + ATP = a tRNA with a 3' CCA end + 3 diphosphate. The catalysed reaction is a tRNA with a 3' CCA end + 2 CTP + ATP = a tRNA with a 3' CCACCA end + 3 diphosphate. Functionally, catalyzes the addition and repair of the essential 3'-terminal CCA sequence in tRNAs without using a nucleic acid template. Adds these three nucleotides in the order of C, C, and A to the tRNA nucleotide-73, using CTP and ATP as substrates and producing inorganic pyrophosphate. tRNA 3'-terminal CCA addition is required both for tRNA processing and repair. Also involved in tRNA surveillance by mediating tandem CCA addition to generate a CCACCA at the 3' terminus of unstable tRNAs. While stable tRNAs receive only 3'-terminal CCA, unstable tRNAs are marked with CCACCA and rapidly degraded. The sequence is that of CCA-adding enzyme from Bordetella bronchiseptica (strain ATCC BAA-588 / NCTC 13252 / RB50) (Alcaligenes bronchisepticus).